The primary structure comprises 185 residues: Large ribosomal subunit protein uL5 (185 aa).

This sequence belongs to the universal ribosomal protein uL5 family. In terms of assembly, part of the 50S ribosomal subunit; part of the 5S rRNA/L5/L18/L25 subcomplex. Contacts the 5S rRNA and the P site tRNA. Forms a bridge to the 30S subunit in the 70S ribosome.

Functionally, this is one of the proteins that bind and probably mediate the attachment of the 5S RNA into the large ribosomal subunit, where it forms part of the central protuberance. In the 70S ribosome it contacts protein S13 of the 30S subunit (bridge B1b), connecting the 2 subunits; this bridge is implicated in subunit movement. Contacts the P site tRNA; the 5S rRNA and some of its associated proteins might help stabilize positioning of ribosome-bound tRNAs. The polypeptide is Large ribosomal subunit protein uL5 (Rhizobium johnstonii (strain DSM 114642 / LMG 32736 / 3841) (Rhizobium leguminosarum bv. viciae)).